The chain runs to 260 residues: Fructose import ATP-binding protein FrcA (260 aa).

Positions 7-251 constitute an ABC transporter domain; sequence LTARGLVKRY…DAVAFMTGAK (245 aa). 39–46 is an ATP binding site; that stretch reads GDNGAGKS.

It belongs to the ABC transporter superfamily. In terms of assembly, the complex is composed of two ATP-binding proteins (FrcA), two transmembrane proteins (FrcC) and a solute-binding protein (FrcB).

Its subcellular location is the cell inner membrane. The enzyme catalyses D-fructose(out) + ATP + H2O = D-fructose(in) + ADP + phosphate + H(+). Functionally, part of the high-affinity ABC transporter complex FrcBCA involved in fructose uptake. Is also a high-affinity transporter for ribose and mannose. Responsible for energy coupling to the transport system. The sequence is that of Fructose import ATP-binding protein FrcA from Rhizobium meliloti (Ensifer meliloti).